The chain runs to 118 residues: UPF0344 protein Aflv_2205 (118 aa).

4 helical membrane-spanning segments follow: residues A4–A24, M32–L52, F60–L80, and F96–F116.

This sequence belongs to the UPF0344 family.

It is found in the cell membrane. This is UPF0344 protein Aflv_2205 from Anoxybacillus flavithermus (strain DSM 21510 / WK1).